A 225-amino-acid polypeptide reads, in one-letter code: MRHGHPPTDIHHGINQGEPMDDNVLRVGIGGPVGSGKTALIEALVPVLIERGHRPAVITNDIYTQEDAQHVRRTLAGVLEPERVVGVETGACPHTAVRDDPTMNLAAGAEMLERFPDTDTLLYESGGDNLTLTFSPALVDLFLFVLDTAEGEKMPRKRGPGITESDLLVINKIDIAQYVRTDIGIMEADAHRVRDDRPVVLTDCLTGVGIDDIALYLESRRKVLI.

31–38 (GPVGSGKT) contacts GTP.

Belongs to the SIMIBI class G3E GTPase family. UreG subfamily. As to quaternary structure, homodimer. UreD, UreF and UreG form a complex that acts as a GTP-hydrolysis-dependent molecular chaperone, activating the urease apoprotein by helping to assemble the nickel containing metallocenter of UreC. The UreE protein probably delivers the nickel.

The protein localises to the cytoplasm. Facilitates the functional incorporation of the urease nickel metallocenter. This process requires GTP hydrolysis, probably effectuated by UreG. The polypeptide is Urease accessory protein UreG 2 (Streptomyces griseus subsp. griseus (strain JCM 4626 / CBS 651.72 / NBRC 13350 / KCC S-0626 / ISP 5235)).